The sequence spans 303 residues: UDP-3-O-acyl-N-acetylglucosamine deacetylase (303 aa).

Residues His78, His237, and Asp241 each contribute to the Zn(2+) site. Residue His264 is the Proton donor of the active site.

This sequence belongs to the LpxC family. Requires Zn(2+) as cofactor.

The enzyme catalyses a UDP-3-O-[(3R)-3-hydroxyacyl]-N-acetyl-alpha-D-glucosamine + H2O = a UDP-3-O-[(3R)-3-hydroxyacyl]-alpha-D-glucosamine + acetate. It participates in glycolipid biosynthesis; lipid IV(A) biosynthesis; lipid IV(A) from (3R)-3-hydroxytetradecanoyl-[acyl-carrier-protein] and UDP-N-acetyl-alpha-D-glucosamine: step 2/6. Its function is as follows. Catalyzes the hydrolysis of UDP-3-O-myristoyl-N-acetylglucosamine to form UDP-3-O-myristoylglucosamine and acetate, the committed step in lipid A biosynthesis. In Pseudomonas paraeruginosa (strain DSM 24068 / PA7) (Pseudomonas aeruginosa (strain PA7)), this protein is UDP-3-O-acyl-N-acetylglucosamine deacetylase.